The sequence spans 360 residues: Phosphoserine aminotransferase (360 aa).

Position 41 (R41) interacts with L-glutamate. Positions 101, 152, 172, and 195 each coordinate pyridoxal 5'-phosphate. K196 bears the N6-(pyridoxal phosphate)lysine mark. Residue 237–238 (NT) participates in pyridoxal 5'-phosphate binding.

The protein belongs to the class-V pyridoxal-phosphate-dependent aminotransferase family. SerC subfamily. As to quaternary structure, homodimer. The cofactor is pyridoxal 5'-phosphate.

It is found in the cytoplasm. The catalysed reaction is O-phospho-L-serine + 2-oxoglutarate = 3-phosphooxypyruvate + L-glutamate. It catalyses the reaction 4-(phosphooxy)-L-threonine + 2-oxoglutarate = (R)-3-hydroxy-2-oxo-4-phosphooxybutanoate + L-glutamate. It functions in the pathway amino-acid biosynthesis; L-serine biosynthesis; L-serine from 3-phospho-D-glycerate: step 2/3. The protein operates within cofactor biosynthesis; pyridoxine 5'-phosphate biosynthesis; pyridoxine 5'-phosphate from D-erythrose 4-phosphate: step 3/5. In terms of biological role, catalyzes the reversible conversion of 3-phosphohydroxypyruvate to phosphoserine and of 3-hydroxy-2-oxo-4-phosphonooxybutanoate to phosphohydroxythreonine. In Burkholderia multivorans (strain ATCC 17616 / 249), this protein is Phosphoserine aminotransferase.